We begin with the raw amino-acid sequence, 323 residues long: Peroxisomal and mitochondrial division factor 2 (323 aa).

Disordered regions lie at residues 1 to 55 (MAEE…NDAI), 73 to 92 (ESKA…KSDE), and 120 to 143 (TART…SQKG). Residues 1-297 (MAEERSLNGE…WSPNVTAVGS (297 aa)) are Cytoplasmic-facing. Residues 13–26 (GQDDESFFDSDQQG) are compositionally biased toward acidic residues. Positions 28–278 (DGKSTELNQK…INGLKNVVEE (251 aa)) form a coiled coil. The helical transmembrane segment at 298–318 (GGAVAAVAVAVAGAAVVCYIY) threads the bilayer. Over 319–323 (HSRRV) the chain is Mitochondrial intermembrane.

Homodimer. Interacts with PMD1.

The protein resides in the mitochondrion outer membrane. In terms of biological role, involved in morphogenesis and proliferation of mitochondria. Does not act redundantly with PMD1. Is not involved in peroxisomal proliferation. The polypeptide is Peroxisomal and mitochondrial division factor 2 (Arabidopsis thaliana (Mouse-ear cress)).